Consider the following 49-residue polypeptide: Light-harvesting protein B-875 beta chain (49 aa).

Residues 2 to 27 (ADKSDLGYTGLTDEQAQELHSVYMSG) are Cytoplasmic-facing. Positions 21 and 39 each coordinate a bacteriochlorophyll. The chain crosses the membrane as a helical; Signal-anchor for type II membrane protein span at residues 28–45 (LWLFSAVAIVAHLAVYIW). At 46–49 (RPWF) the chain is on the periplasmic side.

This sequence belongs to the antenna complex beta subunit family. As to quaternary structure, the core complex is formed by different alpha and beta chains, binding bacteriochlorophyll molecules, and arranged most probably in tetrameric structures disposed around the reaction center. The non-pigmented gamma chains may constitute additional components.

The protein resides in the cell inner membrane. Antenna complexes are light-harvesting systems, which transfer the excitation energy to the reaction centers. In Cereibacter sphaeroides (strain ATCC 17023 / DSM 158 / JCM 6121 / CCUG 31486 / LMG 2827 / NBRC 12203 / NCIMB 8253 / ATH 2.4.1.) (Rhodobacter sphaeroides), this protein is Light-harvesting protein B-875 beta chain (pufB).